The following is a 130-amino-acid chain: Small ribosomal subunit protein uS11 (130 aa).

This sequence belongs to the universal ribosomal protein uS11 family. In terms of assembly, part of the 30S ribosomal subunit. Interacts with proteins S7 and S18. Binds to IF-3.

Its function is as follows. Located on the platform of the 30S subunit, it bridges several disparate RNA helices of the 16S rRNA. Forms part of the Shine-Dalgarno cleft in the 70S ribosome. In Xylella fastidiosa (strain M23), this protein is Small ribosomal subunit protein uS11.